The primary structure comprises 185 residues: MIGDWRVQQVARVVRAGGVIAYPTEAVWGVGCDPWDEDAVLRLLALKERPVEKGLILIADTVEQFDFLLDDLPERWLDRLSGTWPGPNTWLVPHRGRLPEWITGRHDSVALRVTDHPLVKRLCALTGPLVSTSANPAGRPAARSRLRVEQYFPQQLDAVFNGALGGRRNPSVIRDLRSGEVIRPA.

The YrdC-like domain occupies 4–185 (DWRVQQVARV…LRSGEVIRPA (182 aa)).

The protein belongs to the SUA5 family. TsaC subfamily.

It is found in the cytoplasm. It catalyses the reaction L-threonine + hydrogencarbonate + ATP = L-threonylcarbamoyladenylate + diphosphate + H2O. Required for the formation of a threonylcarbamoyl group on adenosine at position 37 (t(6)A37) in tRNAs that read codons beginning with adenine. Catalyzes the conversion of L-threonine, HCO(3)(-)/CO(2) and ATP to give threonylcarbamoyl-AMP (TC-AMP) as the acyladenylate intermediate, with the release of diphosphate. This is Threonylcarbamoyl-AMP synthase from Stutzerimonas stutzeri (strain A1501) (Pseudomonas stutzeri).